The sequence spans 336 residues: SCP domain-containing protein 1 (336 aa).

The first 18 residues, 1-18, serve as a signal peptide directing secretion; that stretch reads MEFKLLLVLCFNIGLICS. Asn47 carries N-linked (GlcNAc...) asparagine glycosylation. Polar residues predominate over residues 73-85; it reads QGGNTAPSSSLPG. The interval 73–94 is disordered; that stretch reads QGGNTAPSSSLPGVSSMPMPSA. The 118-residue stretch at 175-292 folds into the SCP domain; it reads LEEHNKFRSD…YCGDMSFIAC (118 aa). Asn213 and Asn257 each carry an N-linked (GlcNAc...) asparagine glycan.

Component of the acid-insoluble and acid-soluble organic matrix of calcified layers of the shell (at protein level).

It localises to the secreted. The protein is SCP domain-containing protein 1 of Lottia gigantea (Giant owl limpet).